Consider the following 87-residue polypeptide: Small ribosomal subunit protein bS20 (87 aa).

The tract at residues 1 to 29 is disordered; sequence MANTAQARKRARQAVKQNAHNSSQRSTLR. Residues 20 to 29 are compositionally biased toward polar residues; that stretch reads HNSSQRSTLR.

This sequence belongs to the bacterial ribosomal protein bS20 family.

Binds directly to 16S ribosomal RNA. This Herminiimonas arsenicoxydans protein is Small ribosomal subunit protein bS20.